Consider the following 190-residue polypeptide: RNA pyrophosphohydrolase (190 aa).

The region spanning 6-149 is the Nudix hydrolase domain; it reads GYRPNVGIVL…KRGVYARALC (144 aa). A Nudix box motif is present at residues 38–59; it reads GGMHSDETPVEAMYRELNEETG.

Belongs to the Nudix hydrolase family. RppH subfamily. The cofactor is a divalent metal cation.

In terms of biological role, accelerates the degradation of transcripts by removing pyrophosphate from the 5'-end of triphosphorylated RNA, leading to a more labile monophosphorylated state that can stimulate subsequent ribonuclease cleavage. This chain is RNA pyrophosphohydrolase, found in Xylella fastidiosa (strain 9a5c).